The chain runs to 183 residues: Crossover junction endodeoxyribonuclease RuvC (183 aa).

Catalysis depends on residues aspartate 7, glutamate 66, and aspartate 138. Residues aspartate 7, glutamate 66, and aspartate 138 each coordinate Mg(2+).

It belongs to the RuvC family. In terms of assembly, homodimer which binds Holliday junction (HJ) DNA. The HJ becomes 2-fold symmetrical on binding to RuvC with unstacked arms; it has a different conformation from HJ DNA in complex with RuvA. In the full resolvosome a probable DNA-RuvA(4)-RuvB(12)-RuvC(2) complex forms which resolves the HJ. It depends on Mg(2+) as a cofactor.

The protein localises to the cytoplasm. It catalyses the reaction Endonucleolytic cleavage at a junction such as a reciprocal single-stranded crossover between two homologous DNA duplexes (Holliday junction).. The RuvA-RuvB-RuvC complex processes Holliday junction (HJ) DNA during genetic recombination and DNA repair. Endonuclease that resolves HJ intermediates. Cleaves cruciform DNA by making single-stranded nicks across the HJ at symmetrical positions within the homologous arms, yielding a 5'-phosphate and a 3'-hydroxyl group; requires a central core of homology in the junction. The consensus cleavage sequence is 5'-(A/T)TT(C/G)-3'. Cleavage occurs on the 3'-side of the TT dinucleotide at the point of strand exchange. HJ branch migration catalyzed by RuvA-RuvB allows RuvC to scan DNA until it finds its consensus sequence, where it cleaves and resolves the cruciform DNA. The sequence is that of Crossover junction endodeoxyribonuclease RuvC from Burkholderia ambifaria (strain MC40-6).